A 138-amino-acid polypeptide reads, in one-letter code: Acidic phospholipase A2 1 (138 aa).

A signal peptide spans 1–16 (MRTLWIVAVWLMGVEG). 7 cysteine pairs are disulfide-bonded: C42–C131, C44–C60, C59–C111, C65–C138, C66–C104, C73–C97, and C91–C102. Ca(2+) is bound by residues Y43, G45, and G47. H63 is an active-site residue. Residue D64 participates in Ca(2+) binding. Residue D105 is part of the active site.

As to quaternary structure, monomer. Requires Ca(2+) as cofactor. In terms of tissue distribution, expressed by the venom gland.

The protein localises to the secreted. It catalyses the reaction a 1,2-diacyl-sn-glycero-3-phosphocholine + H2O = a 1-acyl-sn-glycero-3-phosphocholine + a fatty acid + H(+). In terms of biological role, snake venom phospholipase that inhibits ADP- and collagen-induced human platelet aggregation. This inhibition is completely inhibited by abolition of catalytic activity in case of collagen as inducer and partially inhibited in case of ADP as inducer. PLA2 catalyzes the calcium-dependent hydrolysis of the 2-acyl groups in 3-sn-phosphoglycerides. The sequence is that of Acidic phospholipase A2 1 from Macrovipera lebetinus (Levantine viper).